A 402-amino-acid chain; its full sequence is Centromere protein C (402 aa).

Residue Lys1 forms a Glycyl lysine isopeptide (Lys-Gly) (interchain with G-Cter in SUMO2) linkage. Residues 1–12 (KSEQSSFSSSSS) are compositionally biased toward low complexity. Residues 1–118 (KSEQSSFSSS…HQKSQMSVET (118 aa)) are disordered. The residue at position 5 (Ser5) is a Phosphoserine. A Nuclear localization signal motif is present at residues 25–42 (QKPPAEKTNQSSKNIGKK). Over residues 44–53 (APFKKQKRAN) the composition is skewed to basic residues. Over residues 88-118 (PNPSGDTGSSKNQDSMAAQNVHQKSQMSVET) the composition is skewed to polar residues. Lys186 participates in a covalent cross-link: Glycyl lysine isopeptide (Lys-Gly) (interchain with G-Cter in SUMO2). Position 193 is a phosphothreonine (Thr193). The interval 196–218 (VRRTMRTRSKPLEYWRGERIDYQ) is MIF2 homology domain II. Residues Ser222 and Ser232 each carry the phosphoserine modification. Residues 239 to 257 (KRKAKGNLGRIITTANRKR) carry the Nuclear localization signal motif. Lys266 is covalently cross-linked (Glycyl lysine isopeptide (Lys-Gly) (interchain with G-Cter in SUMO2)). The MIF2 homology domain III stretch occupies residues 349-402 (LVFYVNLGYLLCTLHETPYIVTTGDSFYVPSGNYYNIKNLLNEERVLLFTQIKS).

Belongs to the CENP-C/MIF2 family. As to quaternary structure, oligomer. Component of the CENPA-NAC complex, at least composed of CENPA, CENPC, CENPH, CENPM, CENPN, CENPT and CENPU. The CENPA-NAC complex interacts with the CENPA-CAD complex, composed of CENPI, CENPK, CENPL, CENPO, CENPP, CENPQ, CENPR and CENPS. Binds to DAXX. Interacts with DNMT3B. Interacts directly with CENPA. Identified in a centromere complex containing histones H2A, H2B and H4, and at least CENPA, CENPB, CENPC, CENPT, CENPN, HJURP, SUPT16H, SSRP1 and RSF1. Interacts with MEIKIN.

Its subcellular location is the nucleus. It localises to the chromosome. The protein resides in the centromere. The protein localises to the kinetochore. Its function is as follows. Component of the CENPA-NAC (nucleosome-associated) complex, a complex that plays a central role in assembly of kinetochore proteins, mitotic progression and chromosome segregation. The CENPA-NAC complex recruits the CENPA-CAD (nucleosome distal) complex and may be involved in incorporation of newly synthesized CENPA into centromeres. CENPC recruits DNA methylation and DNMT3B to both centromeric and pericentromeric satellite repeats and regulates the histone code in these regions. This chain is Centromere protein C (CENPC), found in Ovis aries (Sheep).